The sequence spans 51 residues: Large ribosomal subunit protein eL39 (51 aa).

The protein belongs to the eukaryotic ribosomal protein eL39 family.

The chain is Large ribosomal subunit protein eL39 from Sulfurisphaera tokodaii (strain DSM 16993 / JCM 10545 / NBRC 100140 / 7) (Sulfolobus tokodaii).